The following is a 195-amino-acid chain: Inosine triphosphate pyrophosphatase (195 aa).

ITP is bound at residue 13–18; that stretch reads TGNAKK. Residue E43 coordinates Mg(2+). ITP contacts are provided by residues K55, 71 to 72, K88, 148 to 151, K171, and 176 to 177; these read DT, FGWD, and HR.

This sequence belongs to the HAM1 NTPase family. As to quaternary structure, homodimer. It depends on Mg(2+) as a cofactor. Requires Mn(2+) as cofactor.

The protein resides in the cytoplasm. It carries out the reaction ITP + H2O = IMP + diphosphate + H(+). The catalysed reaction is dITP + H2O = dIMP + diphosphate + H(+). The enzyme catalyses XTP + H2O = XMP + diphosphate + H(+). It catalyses the reaction N(6)-hydroxy-dATP + H2O = N(6)-hydroxy-dAMP + diphosphate + H(+). Pyrophosphatase that hydrolyzes the non-canonical purine nucleotides inosine triphosphate (ITP), deoxyinosine triphosphate (dITP) as well as 2'-deoxy-N-6-hydroxylaminopurine triphosphate (dHAPTP) and xanthosine 5'-triphosphate (XTP) to their respective monophosphate derivatives. The enzyme does not distinguish between the deoxy- and ribose forms. Probably excludes non-canonical purines from RNA and DNA precursor pools, thus preventing their incorporation into RNA and DNA and avoiding chromosomal lesions. The sequence is that of Inosine triphosphate pyrophosphatase (itpa) from Xenopus laevis (African clawed frog).